The chain runs to 299 residues: Dihydroorotate dehydrogenase B (NAD(+)), catalytic subunit (299 aa).

Residues S21 and K44 to S45 each bind FMN. Residues K44, N68–L72, and N125 contribute to the substrate site. N125 contacts FMN. The Nucleophile role is filled by C128. K163 lines the FMN pocket. N189–T190 lines the substrate pocket. Residues G214, G240–G241, and G262–S263 contribute to the FMN site.

This sequence belongs to the dihydroorotate dehydrogenase family. Type 1 subfamily. As to quaternary structure, heterotetramer of 2 PyrK and 2 PyrD type B subunits. The cofactor is FMN.

The protein localises to the cytoplasm. It carries out the reaction (S)-dihydroorotate + NAD(+) = orotate + NADH + H(+). The protein operates within pyrimidine metabolism; UMP biosynthesis via de novo pathway; orotate from (S)-dihydroorotate (NAD(+) route): step 1/1. Functionally, catalyzes the conversion of dihydroorotate to orotate with NAD(+) as electron acceptor. The sequence is that of Dihydroorotate dehydrogenase B (NAD(+)), catalytic subunit (pyrD) from Archaeoglobus fulgidus (strain ATCC 49558 / DSM 4304 / JCM 9628 / NBRC 100126 / VC-16).